The chain runs to 1104 residues: A disintegrin and metalloproteinase with thrombospondin motifs 10 (1104 aa).

The signal sequence occupies residues 1–25; that stretch reads MASACQILRWALALGLGLTFKVTHA. A propeptide spanning residues 26–233 is cleaved from the precursor; that stretch reads FRSQDELLSS…SERGQLGLKR (208 aa). Asn90 and Asn222 each carry an N-linked (GlcNAc...) asparagine glycan. Residues 239-457 form the Peptidase M12B domain; it reads RYVETLVVAD…GLGLCLNNRP (219 aa). Disulfide bonds link Cys315–Cys376, Cys351–Cys358, Cys370–Cys452, Cys409–Cys436, Cys479–Cys501, Cys490–Cys508, Cys496–Cys531, Cys521–Cys536, Cys559–Cys596, Cys563–Cys601, and Cys574–Cys586. Residue His392 coordinates Zn(2+). Residue Glu393 is part of the active site. 2 residues coordinate Zn(2+): His396 and His402. The region spanning 460–546 is the Disintegrin domain; sequence QDFVYPTVAP…VPFGSRPEGV (87 aa). Positions 547-602 constitute a TSP type-1 1 domain; the sequence is DGAWGPWTPWGDCSRSCGGGVSSSSRHCDSPRPTIGGKYCLGERRRHRSCNTNDCP. Residues 706–818 are spacer; sequence ETIEGVFSPA…PALHYRFNAP (113 aa). 2 N-linked (GlcNAc...) asparagine glycosylation sites follow: Asn740 and Asn795. TSP type-1 domains are found at residues 825 to 885, 888 to 943, 944 to 1003, and 1004 to 1058; these read PPYS…EPCP, WVVG…QGPM, CPPE…RRCP, and PARW…AKCD. 3 cysteine pairs are disulfide-bonded: Cys837-Cys879, Cys841-Cys884, and Cys852-Cys866. Asn892 carries N-linked (GlcNAc...) asparagine glycosylation. A PLAC domain is found at 1066 to 1104; that stretch reads GPEECKDVNKVAYCPLVLKFQFCSRAYFRQMCCKTCQGR.

In terms of assembly, interacts with FBN1; this interaction promotes microfibrils assembly. Zn(2+) is required as a cofactor. In terms of processing, glycosylated. Can be O-fucosylated by POFUT2 on a serine or a threonine residue found within the consensus sequence C1-X(2)-(S/T)-C2-G of the TSP type-1 repeat domains where C1 and C2 are the first and second cysteine residue of the repeat, respectively. Fucosylated repeats can then be further glycosylated by the addition of a beta-1,3-glucose residue by the glucosyltransferase, B3GALTL. Fucosylation mediates the efficient secretion of ADAMTS family members. Can also be C-glycosylated with one or two mannose molecules on tryptophan residues within the consensus sequence W-X-X-W of the TPRs, and N-glycosylated. These other glycosylations can also facilitate secretion. In terms of tissue distribution, widely expressed in adult tissues.

It localises to the secreted. The protein localises to the extracellular space. It is found in the extracellular matrix. Its function is as follows. Metalloprotease that participate in microfibrils assembly. Microfibrils are extracellular matrix components occurring independently or along with elastin in the formation of elastic tissues. This chain is A disintegrin and metalloproteinase with thrombospondin motifs 10 (Adamts10), found in Mus musculus (Mouse).